The chain runs to 184 residues: ATP synthase subunit delta (184 aa).

It belongs to the ATPase delta chain family. In terms of assembly, F-type ATPases have 2 components, F(1) - the catalytic core - and F(0) - the membrane proton channel. F(1) has five subunits: alpha(3), beta(3), gamma(1), delta(1), epsilon(1). F(0) has three main subunits: a(1), b(2) and c(10-14). The alpha and beta chains form an alternating ring which encloses part of the gamma chain. F(1) is attached to F(0) by a central stalk formed by the gamma and epsilon chains, while a peripheral stalk is formed by the delta and b chains.

It is found in the cell membrane. In terms of biological role, f(1)F(0) ATP synthase produces ATP from ADP in the presence of a proton or sodium gradient. F-type ATPases consist of two structural domains, F(1) containing the extramembraneous catalytic core and F(0) containing the membrane proton channel, linked together by a central stalk and a peripheral stalk. During catalysis, ATP synthesis in the catalytic domain of F(1) is coupled via a rotary mechanism of the central stalk subunits to proton translocation. Functionally, this protein is part of the stalk that links CF(0) to CF(1). It either transmits conformational changes from CF(0) to CF(1) or is implicated in proton conduction. The polypeptide is ATP synthase subunit delta (Bacillus licheniformis (strain ATCC 14580 / DSM 13 / JCM 2505 / CCUG 7422 / NBRC 12200 / NCIMB 9375 / NCTC 10341 / NRRL NRS-1264 / Gibson 46)).